We begin with the raw amino-acid sequence, 449 residues long: Elongation factor 1-alpha C (449 aa).

The tr-type G domain maps to 5–234; sequence KQHVSIVVIG…DACDPPKRPV (230 aa). The segment at 14-21 is G1; it reads GHVDSGKS. 14 to 21 is a binding site for GTP; it reads GHVDSGKS. Residue lysine 55 is modified to N6,N6-dimethyllysine. The interval 70-74 is G2; that stretch reads GITID. Residue lysine 79 is modified to N6,N6,N6-trimethyllysine. Positions 91–94 are G3; it reads DAPG. Residues 91–95 and 153–156 each bind GTP; these read DAPGH and NKMD. The G4 stretch occupies residues 153–156; that stretch reads NKMD. Residue lysine 187 is modified to N6,N6,N6-trimethyllysine. Residues 194–196 form a G5 region; it reads SGW. Lysine 265 carries the N6-methyllysine modification. N6,N6,N6-trimethyllysine is present on residues lysine 310 and lysine 400.

The protein belongs to the TRAFAC class translation factor GTPase superfamily. Classic translation factor GTPase family. EF-Tu/EF-1A subfamily.

It localises to the cytoplasm. Functionally, this protein promotes the GTP-dependent binding of aminoacyl-tRNA to the A-site of ribosomes during protein biosynthesis. This is Elongation factor 1-alpha C (TEF-C) from Porphyra purpurea (Red seaweed).